The chain runs to 139 residues: Thyrotropin subunit beta (139 aa).

The N-terminal stretch at 1 to 20 (MELSVAMCGLLCLLFSQAVP) is a signal peptide. 6 disulfide bridges follow: Cys22–Cys72, Cys36–Cys87, Cys39–Cys127, Cys47–Cys103, Cys51–Cys105, and Cys108–Cys115. Asn43 carries an N-linked (GlcNAc...) asparagine glycan.

This sequence belongs to the glycoprotein hormones subunit beta family. Heterodimer of a common alpha chain and a unique beta chain which confers biological specificity to thyrotropin, lutropin, follitropin and gonadotropin.

It is found in the secreted. Indispensable for the control of thyroid structure and metabolism. May play some role in the biological processes of the immature fishes. In Salmo salar (Atlantic salmon), this protein is Thyrotropin subunit beta (tshb).